The sequence spans 198 residues: Recombination protein RecR (198 aa).

Residues 57 to 72 (CSVCGHITDQDPCYIC) form a C4-type zinc finger. Residues 80–175 (SVICVVQDPK…KLSRIAHGLP (96 aa)) form the Toprim domain.

Belongs to the RecR family.

In terms of biological role, may play a role in DNA repair. It seems to be involved in an RecBC-independent recombinational process of DNA repair. It may act with RecF and RecO. The protein is Recombination protein RecR of Bacillus licheniformis (strain ATCC 14580 / DSM 13 / JCM 2505 / CCUG 7422 / NBRC 12200 / NCIMB 9375 / NCTC 10341 / NRRL NRS-1264 / Gibson 46).